Reading from the N-terminus, the 548-residue chain is Chaperonin GroEL (548 aa).

ATP contacts are provided by residues 29–32 (TLGP), K50, 86–90 (DGTTT), G416, and D497.

Belongs to the chaperonin (HSP60) family. Forms a cylinder of 14 subunits composed of two heptameric rings stacked back-to-back. Interacts with the co-chaperonin GroES.

The protein resides in the cytoplasm. The catalysed reaction is ATP + H2O + a folded polypeptide = ADP + phosphate + an unfolded polypeptide.. Functionally, together with its co-chaperonin GroES, plays an essential role in assisting protein folding. The GroEL-GroES system forms a nano-cage that allows encapsulation of the non-native substrate proteins and provides a physical environment optimized to promote and accelerate protein folding. The protein is Chaperonin GroEL of Neorickettsia sennetsu (strain ATCC VR-367 / Miyayama) (Ehrlichia sennetsu).